Consider the following 344-residue polypeptide: Phenylalanine--tRNA ligase alpha subunit (344 aa).

Glu269 serves as a coordination point for Mg(2+).

This sequence belongs to the class-II aminoacyl-tRNA synthetase family. Phe-tRNA synthetase alpha subunit type 1 subfamily. In terms of assembly, tetramer of two alpha and two beta subunits. Mg(2+) is required as a cofactor.

It localises to the cytoplasm. The enzyme catalyses tRNA(Phe) + L-phenylalanine + ATP = L-phenylalanyl-tRNA(Phe) + AMP + diphosphate + H(+). This chain is Phenylalanine--tRNA ligase alpha subunit, found in Ralstonia pickettii (strain 12J).